Reading from the N-terminus, the 388-residue chain is Succinate--CoA ligase [ADP-forming] subunit beta (388 aa).

One can recognise an ATP-grasp domain in the interval 9–244 (KEILRKFGVA…LDEEDPAEIE (236 aa)). Residues K46, 53–55 (GRG), E99, A102, and E107 contribute to the ATP site. Mg(2+)-binding residues include N199 and D213. Substrate is bound by residues N264 and 321–323 (GIM).

Belongs to the succinate/malate CoA ligase beta subunit family. As to quaternary structure, heterotetramer of two alpha and two beta subunits. Mg(2+) serves as cofactor.

The enzyme catalyses succinate + ATP + CoA = succinyl-CoA + ADP + phosphate. The catalysed reaction is GTP + succinate + CoA = succinyl-CoA + GDP + phosphate. The protein operates within carbohydrate metabolism; tricarboxylic acid cycle; succinate from succinyl-CoA (ligase route): step 1/1. Functionally, succinyl-CoA synthetase functions in the citric acid cycle (TCA), coupling the hydrolysis of succinyl-CoA to the synthesis of either ATP or GTP and thus represents the only step of substrate-level phosphorylation in the TCA. The beta subunit provides nucleotide specificity of the enzyme and binds the substrate succinate, while the binding sites for coenzyme A and phosphate are found in the alpha subunit. This chain is Succinate--CoA ligase [ADP-forming] subunit beta, found in Burkholderia ambifaria (strain MC40-6).